Consider the following 520-residue polypeptide: Chaperone Ric-8B (520 aa).

Ser-468 carries the post-translational modification Phosphoserine. The residue at position 473 (Thr-473) is a Phosphothreonine.

Belongs to the synembryn family. Interacts with GDP-bound G(s) G-alpha proteins GNAL and GNAS. Does not interact with G-alpha proteins when they are in complex with subunits beta and gamma. Predominantly expressed in the mature olfactory sensory neurons and also in a few regions in the brain.

It localises to the cytoplasm. The protein resides in the cell cortex. Its function is as follows. Chaperone that specifically binds and folds nascent G(s) G-alpha proteins (GNAS and GNAL) prior to G protein heterotrimer formation, promoting their association with the plasma membrane. Also acts as a guanine nucleotide exchange factor (GEF) for G(s) proteins by stimulating exchange of bound GDP for free GTP. Acts as an important component for odorant signal transduction by mediating GNAL (G(olf)-alpha) folding, thereby promoting-dependent cAMP accumulation in olfactory sensory neurons. In Mus musculus (Mouse), this protein is Chaperone Ric-8B.